We begin with the raw amino-acid sequence, 428 residues long: MKILISAVGTTDPISNNHDAALLHIARNYRPDKIVLVYSQEMMVKQDLINKVLLSIEGYNPIIEIDSTILNNDEVFLFDKMYEVMGQIVQKYTNDDNEIILNLSSGTPQIISALFALNRINDYNTQAIQVATPKNRANREYTALTESEIDALIMENQDNRLDFVDRSIKDKSEKFTQALVKRHLRSLIASFDYQAAEAIINRKEYNKLLSKKKIAYIREKLYDFSRVFKNQSILSDILSFPLDDSQKKALNYYLMIDVLKEREHIADVLIKAKSLAEFVIEETIKKDHEGLIVFDGNLPKLNPSFPDCEAILDDIDKKMKKSRGIEDTEERIFSVQSTLNLLSYLNILEFYEYDSQLQTAINGILSLNGERNKVAHGLSEIDTRLLSRKKLKQLSENLRLLLVDCLGIDSSYFNYYDKQNKELIKMLE.

Residues 1–145 form a CARF domain region; that stretch reads MKILISAVGT…RANREYTALT (145 aa). The tract at residues 146-428 is HEPN domain; it reads ESEIDALIME…QNKELIKMLE (283 aa).

The protein belongs to the CRISPR-associated Csm6 family. In terms of assembly, homodimer. The composite ssRNase active site is formed at the dimer interface.

With respect to regulation, non-specific ssRNase activity is allosterically activated about 1000-fold by cyclic hexaadenylate (cA6), a second messenger produced by Cas10 of the ternary Csm effector complex in the presence of a cognate target RNA. ssRNase activity is inhibited by physiological concentrations of ATP (1 mM), activity is restored by cOA. In terms of biological role, CRISPR (clustered regularly interspaced short palindromic repeat) is an adaptive immune system that provides protection against mobile genetic elements (viruses, transposable elements and conjugative plasmids). CRISPR clusters contain spacers, sequences complementary to antecedent mobile elements, and target invading nucleic acids. CRISPR clusters are transcribed and processed into CRISPR RNA (crRNA). The type III-A Csm complex binds crRNA and acts as a crRNA-guided RNase, DNase and cyclic oligoadenylate synthase; binding of target RNA cognate to the crRNA is required for all activities. In a heterologous host this Csm effector complex restricts ssRNA phage MS2, suggesting it may target RNA viruses in vivo. This protein is not part of the Csm complex. Csm functions as a non-specific ssDNase. Base-pairing between crRNA and target RNA to form a ternary Csm complex activates a ssDNase activity; target RNA cleavage suppresses the ssDNase, a temporal control that prevents uncontrolled DNA degradation. Viral RNA transcripts probably tether the Csm complex to the viral genome, recruiting Cas10 ssDNA activity which is able to degrade DNA in the transcription bubble, spatially controlling the DNase activity. Functionally, a single-strand-specific endoribonuclease (ssRNase) that is approximately 1000-fold stimulated by cyclic oligoadenylate (cOA); although several species of cOA are synthesized by this organism only cyclic hexaadenylate (cA6) stimulates the ssRNase activity. Cleaves preferentially within GA or AA dinucleotides, although the presence of cA6 broadens the preference. Linear oligoadenylates do not activate the RNase. This Streptococcus thermophilus protein is CRISPR system endoribonuclease Csm6.